A 428-amino-acid polypeptide reads, in one-letter code: GTPase Obg (428 aa).

The Obg domain occupies 1–158 (MFVDQVQVEV…RFIKLELKVL (158 aa)). The 175-residue stretch at 159–333 (ADVGLVGFPS…LMHKTAEVLK (175 aa)) folds into the OBG-type G domain. Residues 165–172 (GFPSVGKS), 190–194 (FTTLV), 212–215 (DLPG), 282–285 (TKMD), and 314–316 (SSL) contribute to the GTP site. Mg(2+) is bound by residues S172 and T192. Residues 350 to 428 (YKYQPEPALK…IDDFTFEFVE (79 aa)) form the OCT domain.

Belongs to the TRAFAC class OBG-HflX-like GTPase superfamily. OBG GTPase family. Monomer. Requires Mg(2+) as cofactor.

It localises to the cytoplasm. Functionally, an essential GTPase which binds GTP, GDP and possibly (p)ppGpp with moderate affinity, with high nucleotide exchange rates and a fairly low GTP hydrolysis rate. Plays a role in control of the cell cycle, stress response, ribosome biogenesis and in those bacteria that undergo differentiation, in morphogenesis control. This Lacticaseibacillus paracasei (strain ATCC 334 / BCRC 17002 / CCUG 31169 / CIP 107868 / KCTC 3260 / NRRL B-441) (Lactobacillus paracasei) protein is GTPase Obg.